Here is an 858-residue protein sequence, read N- to C-terminus: DNA mismatch repair protein MutS (858 aa).

602–609 (GPNMSGKS) provides a ligand contact to ATP.

It belongs to the DNA mismatch repair MutS family.

Functionally, this protein is involved in the repair of mismatches in DNA. It is possible that it carries out the mismatch recognition step. This protein has a weak ATPase activity. Overexpression of mutSL partially suppresses the high spontaneous mutation frequency of a ytkD/mutM/mutY triple disruption which lacks the system required to prevent damage by oxidized guanine (8-oxo-dGTP). This suggests that MutSL also functions to repair mismatches due to oxidative stress in both growing and stationary phase cells. This is DNA mismatch repair protein MutS from Bacillus subtilis (strain 168).